Consider the following 234-residue polypeptide: MAVVSLSEMMEAGAHFGHQTRRWNPKMSKYIYCARNGVHIIDLVKTALCMNNAYKWTRNAAKSGKRFLFVGTKKQASDVVAQEAVRCGAAYVNQRWLGGMLTNWSTMKARIERLKDLERMESSGAIAMRPKKEAAVLRRELERLQKYLGGLKGMRRLPDVVVLVDQRRESNAVLEARKLDISLVSMLDTNCDPDLCEVPIPCNDDAVRSVQLILGRLADAINEGRKGSNDQRKV.

It belongs to the universal ribosomal protein uS2 family.

The polypeptide is Small ribosomal subunit protein uS2 (Prochlorococcus marinus (strain MIT 9515)).